The primary structure comprises 122 residues: Small ribosomal subunit protein uS13 (122 aa).

The interval 97 to 122 (PVRGQRTHTNARTRKGPAKAIAGKKK) is disordered.

Belongs to the universal ribosomal protein uS13 family. Part of the 30S ribosomal subunit. Forms a loose heterodimer with protein S19. Forms two bridges to the 50S subunit in the 70S ribosome.

Located at the top of the head of the 30S subunit, it contacts several helices of the 16S rRNA. In the 70S ribosome it contacts the 23S rRNA (bridge B1a) and protein L5 of the 50S subunit (bridge B1b), connecting the 2 subunits; these bridges are implicated in subunit movement. Contacts the tRNAs in the A and P-sites. This is Small ribosomal subunit protein uS13 from Brucella abortus (strain S19).